The sequence spans 309 residues: Homoserine O-acetyltransferase (309 aa).

The active-site Acyl-thioester intermediate is the Cys-142. Positions 163 and 192 each coordinate substrate. The Proton acceptor role is filled by His-235. The active site involves Glu-237. Position 249 (Arg-249) interacts with substrate.

It belongs to the MetA family.

Its subcellular location is the cytoplasm. The enzyme catalyses L-homoserine + acetyl-CoA = O-acetyl-L-homoserine + CoA. Its pathway is amino-acid biosynthesis; L-methionine biosynthesis via de novo pathway; O-acetyl-L-homoserine from L-homoserine: step 1/1. Its function is as follows. Transfers an acetyl group from acetyl-CoA to L-homoserine, forming acetyl-L-homoserine. The polypeptide is Homoserine O-acetyltransferase (Petrotoga mobilis (strain DSM 10674 / SJ95)).